A 458-amino-acid polypeptide reads, in one-letter code: UDP-N-acetylmuramate--L-alanine ligase (458 aa).

115-121 (GSHGKTT) serves as a coordination point for ATP.

This sequence belongs to the MurCDEF family.

It localises to the cytoplasm. The catalysed reaction is UDP-N-acetyl-alpha-D-muramate + L-alanine + ATP = UDP-N-acetyl-alpha-D-muramoyl-L-alanine + ADP + phosphate + H(+). The protein operates within cell wall biogenesis; peptidoglycan biosynthesis. Its function is as follows. Cell wall formation. This is UDP-N-acetylmuramate--L-alanine ligase from Anaeromyxobacter dehalogenans (strain 2CP-C).